A 103-amino-acid chain; its full sequence is Small ribosomal subunit protein uS10 (103 aa).

Belongs to the universal ribosomal protein uS10 family. As to quaternary structure, part of the 30S ribosomal subunit.

Its function is as follows. Involved in the binding of tRNA to the ribosomes. This is Small ribosomal subunit protein uS10 from Persephonella marina (strain DSM 14350 / EX-H1).